Consider the following 37-residue polypeptide: Large ribosomal subunit protein bL36 (37 aa).

It belongs to the bacterial ribosomal protein bL36 family.

In Alkaliphilus metalliredigens (strain QYMF), this protein is Large ribosomal subunit protein bL36.